A 214-amino-acid polypeptide reads, in one-letter code: MADS-box protein CMB2 (214 aa).

One can recognise an MADS-box domain in the interval 3-58 (RGKLEIRKIENKTNRQVTFSKRRNGIMKKAQELTVLCDAKVSLLMISSTHKLHHYL). The 91-residue stretch at 84–174 (WERMQEQHRK…VMELEAKFRG (91 aa)) folds into the K-box domain.

As to expression, in flowers. Not found in vegetative tissues.

It localises to the nucleus. This is MADS-box protein CMB2 (CMB2) from Dianthus caryophyllus (Carnation).